The chain runs to 382 residues: Mannitol-1-phosphate 5-dehydrogenase (382 aa).

3-14 (ALHFGAGNIGRG) lines the NAD(+) pocket. Lysine 269 carries the N6-acetyllysine modification.

This sequence belongs to the mannitol dehydrogenase family.

The catalysed reaction is D-mannitol 1-phosphate + NAD(+) = beta-D-fructose 6-phosphate + NADH + H(+). The chain is Mannitol-1-phosphate 5-dehydrogenase from Escherichia coli (strain K12 / MC4100 / BW2952).